We begin with the raw amino-acid sequence, 311 residues long: m7GpppX diphosphatase (311 aa).

Residues Glu-159, Lys-181, and 242-253 (HYQPSFYHLHVH) each bind substrate. Residues 249-253 (HLHVH) carry the Histidine triad motif motif. Residue His-251 is the Nucleophile of the active site.

The protein belongs to the HIT family. In terms of tissue distribution, expressed in neurons in the ventral cord, the nerve ring and the pharynx.

Its subcellular location is the nucleus. It carries out the reaction a 5'-end (N(7)-methyl 5'-triphosphoguanosine)-ribonucleoside in mRNA + H2O = N(7)-methyl-GMP + a 5'-end diphospho-ribonucleoside in mRNA + 2 H(+). The enzyme catalyses a 5'-end (N(2),N(2),N(7)-trimethyl 5'-triphosphoguanosine)-ribonucleoside in mRNA + H2O = (N(2),N(2),N(7))-trimethyl-GMP + a 5'-end diphospho-ribonucleoside in mRNA + 2 H(+). The hydrolytic product 7-methylguanosine diphosphate (m7GDP) efficiently inhibits the decapping scavenger activity and acts as a competitive inhibitor in vitro. Decapping scavenger enzyme that catalyzes the cleavage of a residual cap structure following the degradation of mRNAs of the 3'-&gt;5' exosome-mediated mRNA decay pathway. Hydrolyzes cap analog structures like 7-methylguanosine nucleoside triphosphate (m7GpppG) and tri-methyl guanosine nucleoside triphosphate (m3(2,2,7)GpppG) with up to 2 nucleotide substrates (small capped oligoribonucleotides) and specifically releases 5'-phosphorylated RNA fragments and 7-methylguanosine monophosphate (m7GMP). Does not hydrolyze unmethylated cap analog (GpppG) and shows no decapping activity on intact m7GpppG-capped mRNA molecules. Does not hydrolyze 7-methylguanosine diphosphate (m7GDP) and tri-methylguanosine diphosphate (m3(2,2,7)GDP) to m(7)GMP and m3(2,2,7)GMP, respectively. May also play a role in the 5'-&gt;3 mRNA decay pathway; m7GDP, the downstream product released by the 5'-&gt;3' mRNA mediated decapping activity, may be also converted by dcs-1 to m7GMP. Binds to m7GpppG and strongly to m7GDP. This is m7GpppX diphosphatase (dcs-1) from Caenorhabditis elegans.